We begin with the raw amino-acid sequence, 701 residues long: Acetyl-coenzyme A synthetase, cytoplasmic (701 aa).

Positions 1-26 (MGLPEERRKSGSGSRAREETGAEGRV) are enriched in basic and acidic residues. Residues 1–37 (MGLPEERRKSGSGSRAREETGAEGRVRGWSPPPEVRR) are disordered. Residues 1 to 107 (MGLPEERRKS…GATTNICYNV (107 aa)) are interaction with TFEB. Phosphoserine is present on S30. 219–222 (RGEK) contacts CoA. Residues S263, S265, and S267 each carry the phosphoserine modification. T363 contacts CoA. K418 carries the N6-acetyllysine modification. ATP is bound by residues 439-441 (GEP), 463-468 (DTFWQT), D552, and R567. Residues S575 and R636 each contribute to the CoA site. The Nuclear localization signal motif lies at 656-668 (KTRSGKIMRRVLR). At S659 the chain carries Phosphoserine; by AMPK. At K661 the chain carries N6-acetyllysine.

Belongs to the ATP-dependent AMP-binding enzyme family. In terms of assembly, monomer. Interacts with TFEB. AMPK-mediated phosphorylated form at Ser-659 interacts with KPNA1; this interaction results in nuclear translocation of ACSS2. Interacts with the 'Thr-172' phosphorylated form of PRKAA2. Interacts with CREBBP. Post-translationally, reversibly acetylated at Lys-661. The acetyl-CoA synthase activity is inhibited by acetylation and activated by deacetylation mediated by the deacetylases SIRT1 and SIRT3. Expressed in the hippocampus.

The protein localises to the cytoplasm. It is found in the cytosol. Its subcellular location is the nucleus. The enzyme catalyses acetate + ATP + CoA = acetyl-CoA + AMP + diphosphate. It carries out the reaction propanoate + ATP + CoA = propanoyl-CoA + AMP + diphosphate. With respect to regulation, inhibited by acetylation at Lys-661 and activated by deacetylation mediated by the deacetylases SIRT1 and SIRT3. Functionally, catalyzes the synthesis of acetyl-CoA from short-chain fatty acids. Acetate is the preferred substrate but can also utilize propionate with a much lower affinity. Nuclear ACSS2 promotes glucose deprivation-induced lysosomal biogenesis and autophagy, tumor cell survival and brain tumorigenesis. Glucose deprivation results in AMPK-mediated phosphorylation of ACSS2 leading to its translocation to the nucleus where it binds to TFEB and locally produces acetyl-CoA for histone acetylation in the promoter regions of TFEB target genes thereby activating their transcription. The regulation of genes associated with autophagy and lysosomal activity through ACSS2 is important for brain tumorigenesis and tumor survival. Acts as a chromatin-bound transcriptional coactivator that up-regulates histone acetylation and expression of neuronal genes. Can be recruited to the loci of memory-related neuronal genes to maintain a local acetyl-CoA pool, providing the substrate for histone acetylation and promoting the expression of specific genes, which is essential for maintaining long-term spatial memory. This Mus musculus (Mouse) protein is Acetyl-coenzyme A synthetase, cytoplasmic (Acss2).